We begin with the raw amino-acid sequence, 574 residues long: Arginine--tRNA ligase (574 aa).

The 'HIGH' region motif lies at 124–134; it reads ANPNGPLHIGH.

This sequence belongs to the class-I aminoacyl-tRNA synthetase family.

The protein localises to the cytoplasm. The enzyme catalyses tRNA(Arg) + L-arginine + ATP = L-arginyl-tRNA(Arg) + AMP + diphosphate. This chain is Arginine--tRNA ligase, found in Methanococcus aeolicus (strain ATCC BAA-1280 / DSM 17508 / OCM 812 / Nankai-3).